Reading from the N-terminus, the 136-residue chain is Histone H3.3 (136 aa).

The disordered stretch occupies residues 1–41 (MARTKQTARKSTGVKAPRKQLATKAARKSAPVSGGVKKPHK).

It belongs to the histone H3 family. As to quaternary structure, the nucleosome is a histone octamer containing two molecules each of H2A, H2B, H3 and H4 assembled in one H3-H4 heterotetramer and two H2A-H2B heterodimers. The octamer wraps approximately 147 bp of DNA. Acetylated. Acetylation occurs almost exclusively in the MAC.

The protein localises to the nucleus. It localises to the chromosome. Macronuclear replacement variant which replaces conventional H3 in a subset of nucleosomes. Nucleosomes wrap and compact DNA into chromatin, limiting DNA accessibility to the cellular machineries which require DNA as a template. Histones thereby play a central role in transcription regulation, DNA repair, DNA replication and chromosomal stability. DNA accessibility is regulated via a complex set of post-translational modifications of histones, also called histone code, and nucleosome remodeling. Functions redundantly to H3.4. H3.3 deposition into chromatin is mainly transcription-associated and DNA replication-independent, but it can also enter a replication-coupled pathway. Although not essential for vegetative growth, minor H3 variants are required for producing viable conjugation progeny by affecting late developmental stages of conjugation. The protein is Histone H3.3 of Tetrahymena pyriformis.